The chain runs to 146 residues: Large ribosomal subunit protein bL17 (146 aa).

The tract at residues 118 to 146 (RDPAAKGQDSGPKPEVASDEDEAGEAAAA) is disordered. Over residues 134 to 146 (ASDEDEAGEAAAA) the composition is skewed to acidic residues.

Belongs to the bacterial ribosomal protein bL17 family. Part of the 50S ribosomal subunit. Contacts protein L32.

The protein is Large ribosomal subunit protein bL17 of Acidiphilium cryptum (strain JF-5).